A 521-amino-acid polypeptide reads, in one-letter code: DEAD-box ATP-dependent RNA helicase 1 (521 aa).

The disordered stretch occupies residues 1 to 20; the sequence is MVVAMATKEEEGGPSSRVPH. The Q motif motif lies at 36 to 65; that stretch reads CPVAHLPRLDPRLVKPLQRMGIESFFPVQV. The 231-residue stretch at 72 to 302 folds into the Helicase ATP-binding domain; that stretch reads IGPGAFERDI…QLELQHPLLL (231 aa). 85 to 92 serves as a coordination point for ATP; it reads SPTGSGKT. The short motif at 213 to 216 is the DEAD box element; sequence DETD. One can recognise a Helicase C-terminal domain in the interval 330-480; it reads SLIVLLQELR…SLPEESVETL (151 aa). Over residues 495–507 the composition is skewed to basic and acidic residues; the sequence is LESEATKKSKSGD. The disordered stretch occupies residues 495–521; the sequence is LESEATKKSKSGDKAPNASKRKRTINT.

The protein belongs to the DEAD box helicase family. DDX51/DBP6 subfamily.

The enzyme catalyses ATP + H2O = ADP + phosphate + H(+). This is DEAD-box ATP-dependent RNA helicase 1 from Oryza sativa subsp. japonica (Rice).